Reading from the N-terminus, the 171-residue chain is Co-chaperone protein HscB (171 aa).

The 73-residue stretch at 2-74 (DYFTLFGLPA…LTRAEYLLSL (73 aa)) folds into the J domain.

It belongs to the HscB family. Interacts with HscA and stimulates its ATPase activity. Interacts with IscU.

Co-chaperone involved in the maturation of iron-sulfur cluster-containing proteins. Seems to help targeting proteins to be folded toward HscA. This Salmonella schwarzengrund (strain CVM19633) protein is Co-chaperone protein HscB.